The sequence spans 106 residues: UPF0145 protein BF0270 (106 aa).

It belongs to the UPF0145 family.

This is UPF0145 protein BF0270 from Bacteroides fragilis (strain YCH46).